Here is a 79-residue protein sequence, read N- to C-terminus: Cytochrome b (79 aa).

The next 3 helical transmembrane spans lie at 1 to 7, 31 to 52, and 67 to 79; these read SALFLAM, WLIRYIHANGASLFFICLYLHI, and WNIGIILLILTMA. Heme b is bound by residues histidine 37 and histidine 51.

The protein belongs to the cytochrome b family. In terms of assembly, the cytochrome bc1 complex contains 11 subunits: 3 respiratory subunits (MT-CYB, CYC1 and UQCRFS1), 2 core proteins (UQCRC1 and UQCRC2) and 6 low-molecular weight proteins (UQCRH/QCR6, UQCRB/QCR7, UQCRQ/QCR8, UQCR10/QCR9, UQCR11/QCR10 and a cleavage product of UQCRFS1). This cytochrome bc1 complex then forms a dimer. Heme b is required as a cofactor.

It is found in the mitochondrion inner membrane. In terms of biological role, component of the ubiquinol-cytochrome c reductase complex (complex III or cytochrome b-c1 complex) that is part of the mitochondrial respiratory chain. The b-c1 complex mediates electron transfer from ubiquinol to cytochrome c. Contributes to the generation of a proton gradient across the mitochondrial membrane that is then used for ATP synthesis. The polypeptide is Cytochrome b (MT-CYB) (Dipodomys heermanni (Heermann's kangaroo rat)).